A 260-amino-acid polypeptide reads, in one-letter code: UPF0758 protein Smed_1459 (260 aa).

Residues valine 138–phenylalanine 260 enclose the MPN domain. 3 residues coordinate Zn(2+): histidine 209, histidine 211, and aspartate 222. Residues histidine 209–aspartate 222 carry the JAMM motif motif.

This sequence belongs to the UPF0758 family.

The polypeptide is UPF0758 protein Smed_1459 (Sinorhizobium medicae (strain WSM419) (Ensifer medicae)).